A 572-amino-acid chain; its full sequence is Alpha-1D adrenergic receptor (572 aa).

Residues 1–77 are disordered; it reads MTFRDLLSVS…SAGEPGSAGA (77 aa). The Extracellular portion of the chain corresponds to 1–95; it reads MTFRDLLSVS…AVGGLVVSAQ (95 aa). Composition is skewed to gly residues over residues 23–33 and 42–61; these read SSAGGGGGSAG and AVGG…GAGS. N-linked (GlcNAc...) asparagine glycans are attached at residues Asn-65 and Asn-82. Residues 96 to 121 form a helical membrane-spanning segment; the sequence is GVGVGVFLAAFILMAVAGNLLVILSV. The Cytoplasmic portion of the chain corresponds to 122–133; that stretch reads ACNRHLQTVTNY. The chain crosses the membrane as a helical span at residues 134–159; it reads FIVNLAVADLLLSATVLPFSATMEVL. The Extracellular segment spans residues 160–169; the sequence is GFWAFGRAFC. A helical transmembrane segment spans residues 170-192; sequence DVWAAVDVLCCTASILSLCTISV. Residues 193–213 lie on the Cytoplasmic side of the membrane; the sequence is DRYVGVRHSLKYPAIMTERKA. A helical transmembrane segment spans residues 214–238; that stretch reads AAILALLWVVALVVSVGPLLGWKEP. Topologically, residues 239 to 251 are extracellular; it reads VPPDERFCGITEE. The helical transmembrane segment at 252–275 threads the bilayer; sequence AGYAVFSSVCSFYLPMAVIVVMYC. Residues 276–348 lie on the Cytoplasmic side of the membrane; it reads RVYVVARSTT…KFSREKKAAK (73 aa). A helical membrane pass occupies residues 349–373; it reads TLAIVVGVFVLCWFPFFFVLPLGSL. Over 374-380 the chain is Extracellular; that stretch reads FPQLKPS. A helical membrane pass occupies residues 381–405; that stretch reads EGVFKVIFWLGYFNSCVNPLIYPCS. At 406 to 572 the chain is on the cytoplasmic side; it reads SREFKRAFLR…DYSNLRETDI (167 aa). The S-palmitoyl cysteine moiety is linked to residue Cys-419. The tract at residues 444–488 is disordered; the sequence is GLRQDCAPSSGDAPPGAPLALTALPDPDPEPPGTPEMQAPVASRR. Over residues 450–468 the composition is skewed to low complexity; sequence APSSGDAPPGAPLALTALP.

Belongs to the G-protein coupled receptor 1 family. Adrenergic receptor subfamily. ADRA1D sub-subfamily. As to quaternary structure, interacts with FLNA (via filamin repeat 21); increases PKA-mediated phosphorylation of FLNA. Palmitoylated. Palmitoylation by ZDHHC21 may increase the expression of the receptor and regulate downstream signaling.

The protein localises to the cell membrane. Its function is as follows. This alpha-adrenergic receptor mediates its effect through the influx of extracellular calcium. This is Alpha-1D adrenergic receptor (ADRA1D) from Homo sapiens (Human).